The sequence spans 85 residues: uncharacterized protein (85 aa).

Belongs to the ycf76 family.

It localises to the plastid. The protein resides in the chloroplast. This is an uncharacterized protein from Oryza sativa subsp. japonica (Rice).